A 554-amino-acid polypeptide reads, in one-letter code: Dihydroxy-acid dehydratase (554 aa).

Cys-48 contacts [2Fe-2S] cluster. Residue Asp-80 coordinates Mg(2+). Cys-121 serves as a coordination point for [2Fe-2S] cluster. Mg(2+) is bound by residues Asp-122 and Lys-123. Lys-123 bears the N6-carboxylysine mark. A [2Fe-2S] cluster-binding site is contributed by Cys-193. Residue Glu-444 participates in Mg(2+) binding. The active-site Proton acceptor is the Ser-470.

It belongs to the IlvD/Edd family. Homodimer. [2Fe-2S] cluster is required as a cofactor. It depends on Mg(2+) as a cofactor.

It carries out the reaction (2R)-2,3-dihydroxy-3-methylbutanoate = 3-methyl-2-oxobutanoate + H2O. The enzyme catalyses (2R,3R)-2,3-dihydroxy-3-methylpentanoate = (S)-3-methyl-2-oxopentanoate + H2O. Its pathway is amino-acid biosynthesis; L-isoleucine biosynthesis; L-isoleucine from 2-oxobutanoate: step 3/4. It functions in the pathway amino-acid biosynthesis; L-valine biosynthesis; L-valine from pyruvate: step 3/4. In terms of biological role, functions in the biosynthesis of branched-chain amino acids. Catalyzes the dehydration of (2R,3R)-2,3-dihydroxy-3-methylpentanoate (2,3-dihydroxy-3-methylvalerate) into 2-oxo-3-methylpentanoate (2-oxo-3-methylvalerate) and of (2R)-2,3-dihydroxy-3-methylbutanoate (2,3-dihydroxyisovalerate) into 2-oxo-3-methylbutanoate (2-oxoisovalerate), the penultimate precursor to L-isoleucine and L-valine, respectively. The polypeptide is Dihydroxy-acid dehydratase (Tremblaya princeps).